The chain runs to 263 residues: uncharacterized protein (263 aa).

The first 22 residues, 1 to 22, serve as a signal peptide directing secretion; it reads MGYLKRLVLYIVIMVMSVFIIG. The N-palmitoyl cysteine moiety is linked to residue Cys-23. Cys-23 carries the S-diacylglycerol cysteine lipid modification.

This sequence belongs to the staphylococcal tandem lipoprotein family.

The protein localises to the cell membrane. This is an uncharacterized protein from Staphylococcus aureus (strain N315).